A 1225-amino-acid polypeptide reads, in one-letter code: Catenin delta-2 (1225 aa).

Disordered stretches follow at residues 1 to 51 (MFAR…TSAI), 87 to 117 (SETGSMSSMSSAEEQFQWQSQDGQKDIEDEL), 134 to 242 (SGIL…HLPD), and 256 to 312 (SSTL…KSYS). Composition is skewed to polar residues over residues 20-51 (QPSSASEKTSSLSPGLNTSNGDGSETETTSAI) and 98-108 (AEEQFQWQSQD). Positions 49-84 (SAILASVKEQELQFERLTRELEAERQIVASQLERCK) form a coiled coil. The span at 149 to 160 (SLLSQSALQLNS) shows a compositional bias: low complexity. 2 stretches are compositionally biased toward polar residues: residues 172 to 187 (YHSNQTLALGETTPSQ) and 195 to 209 (ARATGQSFSQGTTSR). R209 carries the omega-N-methylarginine modification. Residues 217–229 (EPAPPPPPPPREP) show a composition bias toward pro residues. R264 is subject to Omega-N-methylarginine. 2 positions are modified to phosphoserine: S267 and S276. Residues R282 and R296 each carry the omega-N-methylarginine modification. The segment covering 299–312 (SPKQSPSRLAKSYS) has biased composition (polar residues). A phosphoserine mark is found at S327, S360, S415, and S461. One copy of the ARM 1 repeat lies at 394-438 (GSRASYSSQHGHLGPELRALQSPEHHIDPIYEDRVYQKPPMRSLS). Disordered regions lie at residues 432 to 483 (PPMR…NAAA) and 514 to 542 (SPYSKSGPALPPEGTLARSPSIDSIQKDP). Residues 469–478 (LQRTGSQHGP) show a composition bias toward polar residues. Phosphoserine is present on S514. Position 516 is a phosphotyrosine (Y516). ARM repeat units follow at residues 540–579 (KDPREFGWRDPELPEVIQMLQHQFPSVQSNAAAYLQHLCF), 582–621 (NKIKAEIRRQGGIQLLVDLLDHRMTEVHRSACGALRNLVY), 626–666 (DDNK…NLSS), 682–724 (LTNA…NVSS), 728–773 (EARR…NLSY), 835–875 (PKGI…NLAA), 882–921 (VYIRAAVRKEKGLPILVELLRIDNDRVVCAVATALRNMAL), and 975–1018 (MENA…SMWQ). Residues 1042 to 1077 (TIERDRQRPYSSSRTPSISPVRVSPNNRSASAPASP) form a disordered region. Positions 1050–1059 (PYSSSRTPSI) are enriched in polar residues. A phosphoserine mark is found at S1065 and S1076. The segment covering 1065–1077 (SPNNRSASAPASP) has biased composition (low complexity).

The protein belongs to the beta-catenin family. In terms of assembly, binds to E-cadherin at a juxtamembrane site within the cytoplasmic domain. Interacts with PDZD2. Interacts with ZBTB33. Binds to PSEN1. Interacts with ARHGEF28. Interacts (via the extreme C-terminus) with FRMPD2 (via the PDZ 2 domain). Interacts with CDK5. Interacts with CTNNB1. Interacts with GSK3A and GSK3B. Interacts with DNM2. Interacts with CCDC85B. Post-translationally, O-glycosylated. Phosphorylated by CDK5. Phosphorylated by GSK3B. Expressed in brain; highest expression is observed in fetal brain.

The protein resides in the nucleus. Its subcellular location is the cell junction. The protein localises to the adherens junction. It is found in the cell projection. It localises to the dendrite. The protein resides in the perikaryon. Functionally, has a critical role in neuronal development, particularly in the formation and/or maintenance of dendritic spines and synapses. Involved in the regulation of Wnt signaling. It probably acts on beta-catenin turnover, facilitating beta-catenin interaction with GSK3B, phosphorylation, ubiquitination and degradation. Functions as a transcriptional activator when bound to ZBTB33. May be involved in neuronal cell adhesion and tissue morphogenesis and integrity by regulating adhesion molecules. This is Catenin delta-2 (CTNND2) from Homo sapiens (Human).